The primary structure comprises 165 residues: MSSVFSGDETAPFFGFLGAAAALVFSCMGAAYGTAKSGVGVASMGVMRPELVMKSIVPVVMAGVLGIYGLIIAVIISTGINPKAKPYFLFDGYAHLSSGLACGLAGLAAGMAIGIVGDAGVRANAQQPKLFVGMILILIFAEALALYGLIVGIILSSRAGQSRAD.

At Met-1 to Thr-10 the chain is on the lumenal side. The helical transmembrane segment at Ala-11–Gly-33 threads the bilayer. The Cytoplasmic portion of the chain corresponds to Thr-34–Ser-55. The chain crosses the membrane as a helical span at residues Ile-56–Ile-76. Over Ser-77 to His-95 the chain is Lumenal. A helical transmembrane segment spans residues Leu-96–Gly-117. Residues Asp-118–Lys-129 are Cytoplasmic-facing. The chain crosses the membrane as a helical span at residues Leu-130–Leu-155. The Lumenal portion of the chain corresponds to Ser-156–Asp-165.

This sequence belongs to the V-ATPase proteolipid subunit family. In terms of assembly, V-ATPase is a heteromultimeric enzyme composed of a peripheral catalytic V1 complex (main components: subunits A, B, C, D, E, and F) attached to an integral membrane V0 proton pore complex (main component: the proteolipid protein; which is present as a hexamer that forms the proton-conducting pore).

The protein localises to the vacuole membrane. In terms of biological role, proton-conducting pore forming subunit of the membrane integral V0 complex of vacuolar ATPase. V-ATPase is responsible for acidifying a variety of intracellular compartments in eukaryotic cells. The chain is V-type proton ATPase 16 kDa proteolipid subunit (VATP-P1) from Avena sativa (Oat).